A 385-amino-acid polypeptide reads, in one-letter code: Effector protein hopAB3 (385 aa).

Disordered stretches follow at residues 1–61, 73–139, and 215–293; these read MVGI…AGRP, TREW…SPLY, and ADSQ…PRIN. The host recognition stretch occupies residues 1–333; the sequence is MVGISGRAGP…INMEDLRAAL (333 aa). Positions 217 to 234 are enriched in low complexity; that stretch reads SQQAARAPARTPPRSSVR. 2 stretches are compositionally biased toward polar residues: residues 245-256 and 265-283; these read ATESSSGSNQRS and MTSN…TSQR.

It belongs to the HopAB family. Interacts physically with plant cell Pto.

The protein localises to the secreted. Functionally, effector protein involved in gene-for-gene resistance in tomato plants. It is recognized by the host Pto resistance protein and elicits Pto and Prf-dependent hypersensitive response (HR) and programmed cell death (PCD), resulting in host immunity. In susceptible plants, promotes virulence, in part, by enhancing the development of disease symptoms and bacterial growth. The sequence is that of Effector protein hopAB3 (hopAB3) from Pseudomonas syringae pv. maculicola.